The sequence spans 303 residues: Bifunctional protein FolD (303 aa).

NADP(+)-binding positions include 175-177 (GVS) and Ile243.

Belongs to the tetrahydrofolate dehydrogenase/cyclohydrolase family. As to quaternary structure, homodimer.

It catalyses the reaction (6R)-5,10-methylene-5,6,7,8-tetrahydrofolate + NADP(+) = (6R)-5,10-methenyltetrahydrofolate + NADPH. The enzyme catalyses (6R)-5,10-methenyltetrahydrofolate + H2O = (6R)-10-formyltetrahydrofolate + H(+). It functions in the pathway one-carbon metabolism; tetrahydrofolate interconversion. Catalyzes the oxidation of 5,10-methylenetetrahydrofolate to 5,10-methenyltetrahydrofolate and then the hydrolysis of 5,10-methenyltetrahydrofolate to 10-formyltetrahydrofolate. This is Bifunctional protein FolD from Xanthomonas oryzae pv. oryzae (strain PXO99A).